The following is a 365-amino-acid chain: Chorismate synthase (365 aa).

An NADP(+)-binding site is contributed by Arg-46. FMN is bound by residues 123–125 (RSS), 241–242 (NG), Gly-281, 296–300 (KPTPS), and Arg-322.

Belongs to the chorismate synthase family. In terms of assembly, homotetramer. It depends on FMNH2 as a cofactor.

The catalysed reaction is 5-O-(1-carboxyvinyl)-3-phosphoshikimate = chorismate + phosphate. It participates in metabolic intermediate biosynthesis; chorismate biosynthesis; chorismate from D-erythrose 4-phosphate and phosphoenolpyruvate: step 7/7. Catalyzes the anti-1,4-elimination of the C-3 phosphate and the C-6 proR hydrogen from 5-enolpyruvylshikimate-3-phosphate (EPSP) to yield chorismate, which is the branch point compound that serves as the starting substrate for the three terminal pathways of aromatic amino acid biosynthesis. This reaction introduces a second double bond into the aromatic ring system. The chain is Chorismate synthase from Helicobacter pylori (strain ATCC 700392 / 26695) (Campylobacter pylori).